Consider the following 790-residue polypeptide: Penicillin-binding protein 1A (790 aa).

The Cytoplasmic segment spans residues 1-6; the sequence is MYKSLF. The chain crosses the membrane as a helical; Signal-anchor for type II membrane protein span at residues 7-27; that stretch reads FCLKIFAVLILVGCGITAYII. Topologically, residues 28-790 are periplasmic; sequence YHYSRDLPDY…SKEDQSQEIY (763 aa). Residues 49–220 are transglycosylase; that stretch reads TRIYSHDGKL…SELNPERNYA (172 aa). The active-site Proton donor; for transglycosylase activity is Glu87. The interval 398–711 is transpeptidase; sequence DVIVVEPIKD…SNVVLPIFID (314 aa). Residue Ser457 is the Acyl-ester intermediate; for transpeptidase activity of the active site.

It in the N-terminal section; belongs to the glycosyltransferase 51 family. The protein in the C-terminal section; belongs to the transpeptidase family.

It localises to the cell inner membrane. It catalyses the reaction [GlcNAc-(1-&gt;4)-Mur2Ac(oyl-L-Ala-gamma-D-Glu-L-Lys-D-Ala-D-Ala)](n)-di-trans,octa-cis-undecaprenyl diphosphate + beta-D-GlcNAc-(1-&gt;4)-Mur2Ac(oyl-L-Ala-gamma-D-Glu-L-Lys-D-Ala-D-Ala)-di-trans,octa-cis-undecaprenyl diphosphate = [GlcNAc-(1-&gt;4)-Mur2Ac(oyl-L-Ala-gamma-D-Glu-L-Lys-D-Ala-D-Ala)](n+1)-di-trans,octa-cis-undecaprenyl diphosphate + di-trans,octa-cis-undecaprenyl diphosphate + H(+). The catalysed reaction is Preferential cleavage: (Ac)2-L-Lys-D-Ala-|-D-Ala. Also transpeptidation of peptidyl-alanyl moieties that are N-acyl substituents of D-alanine.. The protein operates within cell wall biogenesis; peptidoglycan biosynthesis. Its function is as follows. Cell wall formation. Synthesis of cross-linked peptidoglycan from the lipid intermediates. The enzyme has a penicillin-insensitive transglycosylase N-terminal domain (formation of linear glycan strands) and a penicillin-sensitive transpeptidase C-terminal domain (cross-linking of the peptide subunits). The sequence is that of Penicillin-binding protein 1A (mrcA) from Rickettsia felis (strain ATCC VR-1525 / URRWXCal2) (Rickettsia azadi).